Reading from the N-terminus, the 420-residue chain is Alpha-ketoglutarate-dependent xanthine dioxygenase xan-1 (420 aa).

The Fe cation site is built by His-157 and Asp-159. 2-oxoglutarate is bound by residues Thr-206 and Trp-336. His-351 lines the Fe cation pocket. Arg-366 contacts 2-oxoglutarate. Arg-366 contacts substrate.

The protein belongs to the TfdA dioxygenase family. Fe(2+) is required as a cofactor.

It is found in the cytoplasm. Its subcellular location is the cytosol. It catalyses the reaction xanthine + 2-oxoglutarate + O2 = urate + succinate + CO2. Its function is as follows. Alpha-ketoglutarate-dependent xanthine dioxygenase is a non-heme mononuclear Fe(2+) enzyme that decarboxylates alpha-ketoglutarate to succinate and CO(2) while hydroxylating xanthine to generate uric acid. Allows xanthine utilization as a nitrogen source. The polypeptide is Alpha-ketoglutarate-dependent xanthine dioxygenase xan-1 (Neurospora crassa (strain ATCC 24698 / 74-OR23-1A / CBS 708.71 / DSM 1257 / FGSC 987)).